Consider the following 802-residue polypeptide: Phenylalanine--tRNA ligase beta subunit (802 aa).

The 116-residue stretch at 40–155 folds into the tRNA-binding domain; it reads SASLKNVVVG…AHVETGVNAI (116 aa). The B5 domain occupies 409–484; that stretch reads KAVNKIETSL…RIYGYDEIPV (76 aa). The Mg(2+) site is built by Asp462, Asp468, Glu471, and Glu472. The 94-residue stretch at 709–802 folds into the FDX-ACB domain; it reads PRYPEMTRDL…LQEKLNAIIR (94 aa).

This sequence belongs to the phenylalanyl-tRNA synthetase beta subunit family. Type 1 subfamily. Tetramer of two alpha and two beta subunits. Mg(2+) serves as cofactor.

It localises to the cytoplasm. The enzyme catalyses tRNA(Phe) + L-phenylalanine + ATP = L-phenylalanyl-tRNA(Phe) + AMP + diphosphate + H(+). This is Phenylalanine--tRNA ligase beta subunit from Listeria monocytogenes serovar 1/2a (strain ATCC BAA-679 / EGD-e).